The following is a 476-amino-acid chain: MIAPDLTMDIPTELGRVHFVGIGGSGMSGIARLFLAAGHRVTGSDSRDSDAVQALRELGAEIHVGHDAAHVGDADALVVTGALWQDNPEYVLAKERGLPILHRSQALAWLISGQRLVAVAGAHGKTTSTGMIVTALLEAGRDPSFVNGGVIGGIGVSSAPGSEELFVVEADESDGSFLLYDTAVALITNVDADHLDHYGSHEAFDDAFVRFASAASELVVISSDDPGARRVTARIEGRVVTFGEDPAADIRITDIVTDGPVAFTLTHDGVSRRAALRVPGRHNAINAAGAYAVLVGLGVDPDDAIAGLAGFSGTSRRFELHAEVRGVSVYDDYAHHPTEVRAALEAARTVVGEGRIIAVHQPHLYSRTQMMAGDFARVYEELADHTIVLDVFGAREDPIPGVTGALVSERFADASHVDYLPDWQQAADRAAEIARDGDFIVTLSCGDVYRIIPQVIGALERPAGSAQPAASSRPRE.

121 to 127 (GAHGKTT) is an ATP binding site.

This sequence belongs to the MurCDEF family.

Its subcellular location is the cytoplasm. It carries out the reaction UDP-N-acetyl-alpha-D-muramate + L-alanine + ATP = UDP-N-acetyl-alpha-D-muramoyl-L-alanine + ADP + phosphate + H(+). It functions in the pathway cell wall biogenesis; peptidoglycan biosynthesis. In terms of biological role, cell wall formation. This chain is UDP-N-acetylmuramate--L-alanine ligase, found in Clavibacter sepedonicus (Clavibacter michiganensis subsp. sepedonicus).